Consider the following 568-residue polypeptide: Sphingosine-1-phosphate lyase 1 (568 aa).

The Lumenal portion of the chain corresponds to 1–40 (MPSTDLLMLKAFEPYLEILEVYSTKAKNYVNGHCTKYEPW). The chain crosses the membrane as a helical; Signal-anchor for type III membrane protein span at residues 41-61 (QLIAWSVVWTLLIVWGYEFVF). Residues 62-568 (QPESLWSRFK…SQMNGSPKPH (507 aa)) lie on the Cytoplasmic side of the membrane. The residue at position 353 (Lys353) is an N6-(pyridoxal phosphate)lysine; alternate. At Lys353 the chain carries N6-acetyllysine; alternate. 2 positions are modified to 3'-nitrotyrosine: Tyr356 and Tyr366. At Ser564 the chain carries Phosphoserine.

This sequence belongs to the group II decarboxylase family. Sphingosine-1-phosphate lyase subfamily. Homodimer. Pyridoxal 5'-phosphate serves as cofactor. Ubiquitously expressed. Expressed in fetal and adult adrenal gland (at protein level).

It is found in the endoplasmic reticulum membrane. The catalysed reaction is sphinganine 1-phosphate = hexadecanal + phosphoethanolamine. It carries out the reaction sphing-4-enine 1-phosphate = (2E)-hexadecenal + phosphoethanolamine. The protein operates within lipid metabolism; sphingolipid metabolism. Functionally, cleaves phosphorylated sphingoid bases (PSBs), such as sphingosine-1-phosphate, into fatty aldehydes and phosphoethanolamine. Elevates stress-induced ceramide production and apoptosis. Required for global lipid homeostasis in liver and cholesterol homeostasis in fibroblasts. Involved in the regulation of pro-inflammatory response and neutrophil trafficking. Modulates neuronal autophagy via phosphoethanolamine production which regulates accumulation of aggregate-prone proteins such as APP. Seems to play a role in establishing neuronal contact sites and axonal maintenance. This chain is Sphingosine-1-phosphate lyase 1, found in Homo sapiens (Human).